Here is a 404-residue protein sequence, read N- to C-terminus: Phosphoglycerate kinase (404 aa).

Substrate contacts are provided by residues 22–24, arginine 37, 60–63, arginine 119, and arginine 156; these read DLN and HLGR. ATP is bound by residues lysine 206, glycine 302, glutamate 333, and 359 to 362; that span reads GGDS.

The protein belongs to the phosphoglycerate kinase family. Monomer.

It is found in the cytoplasm. It catalyses the reaction (2R)-3-phosphoglycerate + ATP = (2R)-3-phospho-glyceroyl phosphate + ADP. Its pathway is carbohydrate degradation; glycolysis; pyruvate from D-glyceraldehyde 3-phosphate: step 2/5. In Clavibacter michiganensis subsp. michiganensis (strain NCPPB 382), this protein is Phosphoglycerate kinase.